The following is a 604-amino-acid chain: Sulfite reductase [NADPH] flavoprotein alpha-component (604 aa).

The Flavodoxin-like domain occupies 68 to 206 (LSIIFASQTG…PAAEWRKQAL (139 aa)). Residues 74–79 (SQTGNA), 121–124 (STNG), and 157–166 (LGDSSYEFFC) contribute to the FMN site. The region spanning 239 to 453 (QNPYTATLLT…VEHNNNFKLP (215 aa)) is the FAD-binding FR-type domain. FAD-binding positions include Thr-327, Gly-361, 391–394 (RLYS), 409–411 (TVG), Tyr-415, and 424–427 (GGAS). NADP(+) contacts are provided by residues 524–525 (SR), 530–534 (KVYVQ), and Asp-566. Tyr-604 provides a ligand contact to FAD.

It belongs to the NADPH-dependent sulphite reductase flavoprotein subunit CysJ family. In the N-terminal section; belongs to the flavodoxin family. The protein in the C-terminal section; belongs to the flavoprotein pyridine nucleotide cytochrome reductase family. As to quaternary structure, alpha(8)-beta(8). The alpha component is a flavoprotein, the beta component is a hemoprotein. FAD is required as a cofactor. It depends on FMN as a cofactor.

It catalyses the reaction hydrogen sulfide + 3 NADP(+) + 3 H2O = sulfite + 3 NADPH + 4 H(+). It participates in sulfur metabolism; hydrogen sulfide biosynthesis; hydrogen sulfide from sulfite (NADPH route): step 1/1. Its function is as follows. Component of the sulfite reductase complex that catalyzes the 6-electron reduction of sulfite to sulfide. This is one of several activities required for the biosynthesis of L-cysteine from sulfate. The flavoprotein component catalyzes the electron flow from NADPH -&gt; FAD -&gt; FMN to the hemoprotein component. This is Sulfite reductase [NADPH] flavoprotein alpha-component from Aliivibrio fischeri (strain ATCC 700601 / ES114) (Vibrio fischeri).